Here is a 125-residue protein sequence, read N- to C-terminus: Insulin growth factor-like family member 3 (125 aa).

A signal peptide spans 1 to 24 (MRPRCCILALVCWITVFLLQCSKG).

Belongs to the IGFL family. Detected in the cerebellum.

The protein resides in the secreted. Potential ligand of the IGFLR1 cell membrane receptor. The protein is Insulin growth factor-like family member 3 (IGFL3) of Homo sapiens (Human).